We begin with the raw amino-acid sequence, 808 residues long: Type VI secretion system spike protein VgrG4b (808 aa).

This sequence belongs to the VgrG protein family.

It is found in the secreted. Its function is as follows. Part of the H2 type VI secretion system (H2-T6SS) specialized secretion system, which delivers several virulence factors in both prokaryotic and eukaryotic cells during infection. Allows the delivery of the phospholipase effector PldA to target cells where it exerts its toxicity. In Pseudomonas aeruginosa (strain ATCC 15692 / DSM 22644 / CIP 104116 / JCM 14847 / LMG 12228 / 1C / PRS 101 / PAO1), this protein is Type VI secretion system spike protein VgrG4b.